Consider the following 1373-residue polypeptide: DNA-directed RNA polymerase subunit beta (1373 aa).

It belongs to the RNA polymerase beta chain family. The RNAP catalytic core consists of 2 alpha, 1 beta, 1 beta' and 1 omega subunit. When a sigma factor is associated with the core the holoenzyme is formed, which can initiate transcription.

The catalysed reaction is RNA(n) + a ribonucleoside 5'-triphosphate = RNA(n+1) + diphosphate. In terms of biological role, DNA-dependent RNA polymerase catalyzes the transcription of DNA into RNA using the four ribonucleoside triphosphates as substrates. The sequence is that of DNA-directed RNA polymerase subunit beta from Rickettsia akari (strain Hartford).